The following is a 362-amino-acid chain: Tryptophan 2,3-dioxygenase (362 aa).

Substrate is bound by residues Phe-40–His-44 and Arg-111. A heme-binding site is contributed by His-297. Thr-311 provides a ligand contact to substrate.

The protein belongs to the tryptophan 2,3-dioxygenase family. As to quaternary structure, homotetramer. Heme serves as cofactor.

It catalyses the reaction L-tryptophan + O2 = N-formyl-L-kynurenine. Its pathway is amino-acid degradation; L-tryptophan degradation via kynurenine pathway; L-kynurenine from L-tryptophan: step 1/2. In terms of biological role, heme-dependent dioxygenase that catalyzes the oxidative cleavage of the L-tryptophan (L-Trp) pyrrole ring and converts L-tryptophan to N-formyl-L-kynurenine. Catalyzes the oxidative cleavage of the indole moiety. The polypeptide is Tryptophan 2,3-dioxygenase (Alteromonas mediterranea (strain DSM 17117 / CIP 110805 / LMG 28347 / Deep ecotype)).